A 303-amino-acid polypeptide reads, in one-letter code: uncharacterized protein (303 aa).

The 128-residue stretch at 173–300 folds into the Fe2OG dioxygenase domain; sequence KLPELLGQLN…RFTVNGWIRK (128 aa).

The cofactor is Fe(2+). It depends on L-ascorbate as a cofactor.

This is an uncharacterized protein from Synechocystis sp. (strain ATCC 27184 / PCC 6803 / Kazusa).